A 312-amino-acid chain; its full sequence is Ribosomal protein L11 methyltransferase (312 aa).

S-adenosyl-L-methionine is bound by residues T162, G183, D205, and N248.

It belongs to the methyltransferase superfamily. PrmA family.

Its subcellular location is the cytoplasm. The enzyme catalyses L-lysyl-[protein] + 3 S-adenosyl-L-methionine = N(6),N(6),N(6)-trimethyl-L-lysyl-[protein] + 3 S-adenosyl-L-homocysteine + 3 H(+). In terms of biological role, methylates ribosomal protein L11. This Geobacillus thermodenitrificans (strain NG80-2) protein is Ribosomal protein L11 methyltransferase.